A 381-amino-acid chain; its full sequence is Creatine kinase M-type (381 aa).

One can recognise a Phosphagen kinase N-terminal domain in the interval 11-98 (KLNYKSEEEY…FDPIIQDRHG (88 aa)). A Phosphagen kinase C-terminal domain is found at 125–367 (YVLSSRVRTG…KLMVEMEKKL (243 aa)). 128–132 (SSRVR) contributes to the ATP binding site. S164 is subject to Phosphoserine. The residue at position 166 (T166) is a Phosphothreonine. S178 carries the phosphoserine modification. T180 bears the Phosphothreonine mark. H191 is a binding site for ATP. S199 bears the Phosphoserine mark. 2 residues coordinate ATP: R236 and R292. Phosphothreonine is present on residues T313 and T322. 320–325 (RGTGGV) serves as a coordination point for ATP. S372 is modified (phosphoserine).

Belongs to the ATP:guanido phosphotransferase family. As to quaternary structure, dimer of identical or non-identical chains, which can be either B (brain type) or M (muscle type). With MM being the major form in skeletal muscle and myocardium, MB existing in myocardium, and BB existing in many tissues, especially brain.

It carries out the reaction creatine + ATP = N-phosphocreatine + ADP + H(+). Functionally, reversibly catalyzes the transfer of phosphate between ATP and various phosphogens (e.g. creatine phosphate). Creatine kinase isoenzymes play a central role in energy transduction in tissues with large, fluctuating energy demands, such as skeletal muscle, heart, brain and spermatozoa. The sequence is that of Creatine kinase M-type (CKM) from Oryctolagus cuniculus (Rabbit).